The primary structure comprises 196 residues: MSVLSRAVQLAFVALGLCLFFSNLVAAQPIAGPSLGVSVKSVNGVCRASKPCELEVTVRNTNTKKPATVLNWNTPLDPYADQLGVFEVRDSKGAVVPLDFIQIRRITPPPASDLVEIKAASSVKVKVALETLSRAELPAGTKYTITATGWWQAVWDQPKEQVVQSHLQELSGAFSGNFNSNSVQVTKVCSSSSPQQ.

The N-terminal stretch at Met-1–Ala-27 is a signal peptide.

Its subcellular location is the secreted. This is an uncharacterized protein from Arthroderma benhamiae (strain ATCC MYA-4681 / CBS 112371) (Trichophyton mentagrophytes).